A 181-amino-acid polypeptide reads, in one-letter code: Oligoribonuclease (181 aa).

In terms of domain architecture, Exonuclease spans 8-171 (LIWLDMEMTG…ADILESIEEM (164 aa)). Residue tyrosine 129 is part of the active site.

It belongs to the oligoribonuclease family.

It is found in the cytoplasm. 3'-to-5' exoribonuclease specific for small oligoribonucleotides. The sequence is that of Oligoribonuclease from Chromobacterium violaceum (strain ATCC 12472 / DSM 30191 / JCM 1249 / CCUG 213 / NBRC 12614 / NCIMB 9131 / NCTC 9757 / MK).